Here is a 512-residue protein sequence, read N- to C-terminus: N-acetyltryptophan 6-hydroxylase ivoC (512 aa).

The helical transmembrane segment at leucine 6 to tyrosine 26 threads the bilayer. The N-linked (GlcNAc...) asparagine glycan is linked to asparagine 118. Cysteine 453 provides a ligand contact to heme.

This sequence belongs to the cytochrome P450 family. Heme is required as a cofactor.

It localises to the membrane. Its pathway is pigment biosynthesis. In terms of biological role, N-acetyltryptophan 6-hydroxylase; part of the pathway that mediates the biosynthesis of the gray-brown conidiophore pigment. The first step of the pathway is performed by the nonribosomal peptide synthetase ivoA that catalyzes ATP-dependent unidirectional stereoinversion of L-tryptophan to D-tryptophan with complete conversion. While the stereoinversion is catalyzed by the epimerization (E) domain of ivoA, the terminal condensation (C) domain stereoselectively hydrolyzes D-tryptophanyl-S-phosphopantetheine thioester and thus represents a non-canonical C domain function. D-tryptophan is acetylated, probably by an endogenous acetyltransferase. N-acetyltryptophan is further 6-hydroxylated into N-acetyl-6-hydroxytryptophan (AHT) by the cytochrome P450 monooxygenase ivoC. N-acetyl-6-hydroxytryptophan is substrate of the N-acetyl-6-hydroxytryptophan oxidase ivoB to produce the gray-brown conidiophore pigment. The polypeptide is N-acetyltryptophan 6-hydroxylase ivoC (Emericella nidulans (strain FGSC A4 / ATCC 38163 / CBS 112.46 / NRRL 194 / M139) (Aspergillus nidulans)).